Consider the following 373-residue polypeptide: tRNA-specific 2-thiouridylase MnmA (373 aa).

ATP contacts are provided by residues 12–19 (GMSGGVDS) and M38. The interaction with target base in tRNA stretch occupies residues 98-100 (NPD). C103 acts as the Nucleophile in catalysis. C103 and C200 form a disulfide bridge. G127 contributes to the ATP binding site. The segment at 150–152 (KDQ) is interaction with tRNA. The Cysteine persulfide intermediate role is filled by C200. Residues 312–313 (RY) form an interaction with tRNA region.

It belongs to the MnmA/TRMU family.

The protein localises to the cytoplasm. It carries out the reaction S-sulfanyl-L-cysteinyl-[protein] + uridine(34) in tRNA + AH2 + ATP = 2-thiouridine(34) in tRNA + L-cysteinyl-[protein] + A + AMP + diphosphate + H(+). Functionally, catalyzes the 2-thiolation of uridine at the wobble position (U34) of tRNA, leading to the formation of s(2)U34. The sequence is that of tRNA-specific 2-thiouridylase MnmA from Streptococcus pyogenes serotype M49 (strain NZ131).